The primary structure comprises 891 residues: Putative alpha,alpha-trehalose-phosphate synthase [UDP-forming] 100 kDa subunit (891 aa).

A Phosphothreonine modification is found at Thr88. The tract at residues 88 to 126 (TGGSMTPGLGAMSPIPGSGRSSPLYTQPRSRATSPSRVR) is disordered. Positions 106–124 (GRSSPLYTQPRSRATSPSR) are enriched in polar residues. Residues Ser108 and Ser109 each carry the phosphoserine modification. Residues 132 to 613 (AAPGIGAGAL…VTGFETKLKK (482 aa)) form a glycosyltransferase region.

This sequence in the N-terminal section; belongs to the glycosyltransferase 20 family.

It catalyses the reaction D-glucose 6-phosphate + UDP-alpha-D-glucose = alpha,alpha-trehalose 6-phosphate + UDP + H(+). This is Putative alpha,alpha-trehalose-phosphate synthase [UDP-forming] 100 kDa subunit from Schizosaccharomyces pombe (strain 972 / ATCC 24843) (Fission yeast).